Reading from the N-terminus, the 554-residue chain is Developmental and secondary metabolism regulator ve-1 (554 aa).

In terms of domain architecture, Velvet spans 31–230 (GRKLWYSLRV…AEQGCRVRIR (200 aa)). Residues 45-50 (LRARAC) carry the Nuclear localization signal motif. The span at 166–175 (TKEDKDKDPE) shows a compositional bias: basic and acidic residues. Disordered regions lie at residues 166–190 (TKED…SFDF), 232–430 (DVRM…PHRL), and 465–528 (PRAY…VDDK). A compositionally biased stretch (polar residues) spans 276–292 (RSMSGSTERTPYSSISD). Pro residues-rich tracts occupy residues 363-372 (SYPPPPPPHQ) and 485-494 (LPPPPPPPPQ). Residues 455–487 (SPSNMAAPPYPRAYSVSNSGGLTSAGGYNQLPP) form a PEST region. Over residues 500–528 (RAHDQTFRADPEMRRYQDGARERESVDDK) the composition is skewed to basic and acidic residues.

Belongs to the velvet family. VeA subfamily. In terms of assembly, component of the heterotrimeric velvet complex composed of lae-1, ve-1 and vel-2; Ve-1 acting as a bridging protein between lae-1 and vel-2.

It localises to the nucleus. Its subcellular location is the cytoplasm. In terms of biological role, component of the velvet transcription factor complex that controls sexual/asexual developmental ratio in response to light, promoting sexual development in the darkness while stimulating asexual sporulation under illumination. The velvet complex hat acts as a global regulator for secondary metabolite gene expression. In Neurospora crassa (strain ATCC 24698 / 74-OR23-1A / CBS 708.71 / DSM 1257 / FGSC 987), this protein is Developmental and secondary metabolism regulator ve-1.